Reading from the N-terminus, the 346-residue chain is UDP-3-O-acylglucosamine N-acyltransferase (346 aa).

Histidine 253 serves as the catalytic Proton acceptor.

This sequence belongs to the transferase hexapeptide repeat family. LpxD subfamily. Homotrimer.

It catalyses the reaction a UDP-3-O-[(3R)-3-hydroxyacyl]-alpha-D-glucosamine + a (3R)-hydroxyacyl-[ACP] = a UDP-2-N,3-O-bis[(3R)-3-hydroxyacyl]-alpha-D-glucosamine + holo-[ACP] + H(+). It participates in bacterial outer membrane biogenesis; LPS lipid A biosynthesis. In terms of biological role, catalyzes the N-acylation of UDP-3-O-acylglucosamine using 3-hydroxyacyl-ACP as the acyl donor. Is involved in the biosynthesis of lipid A, a phosphorylated glycolipid that anchors the lipopolysaccharide to the outer membrane of the cell. The sequence is that of UDP-3-O-acylglucosamine N-acyltransferase from Rickettsia felis (strain ATCC VR-1525 / URRWXCal2) (Rickettsia azadi).